A 945-amino-acid chain; its full sequence is Leucine--tRNA ligase 1 (945 aa).

Residues 42-52 (PYTNSPLHIGH) carry the 'HIGH' region motif. A 'KMSKS' region motif is present at residues 625–629 (KMSKS). Lysine 628 serves as a coordination point for ATP.

The protein belongs to the class-I aminoacyl-tRNA synthetase family.

The protein resides in the cytoplasm. The catalysed reaction is tRNA(Leu) + L-leucine + ATP = L-leucyl-tRNA(Leu) + AMP + diphosphate. This Sulfurisphaera tokodaii (strain DSM 16993 / JCM 10545 / NBRC 100140 / 7) (Sulfolobus tokodaii) protein is Leucine--tRNA ligase 1.